We begin with the raw amino-acid sequence, 95 residues long: Aspartyl/glutamyl-tRNA(Asn/Gln) amidotransferase subunit C (95 aa).

Belongs to the GatC family. As to quaternary structure, heterotrimer of A, B and C subunits.

The enzyme catalyses L-glutamyl-tRNA(Gln) + L-glutamine + ATP + H2O = L-glutaminyl-tRNA(Gln) + L-glutamate + ADP + phosphate + H(+). The catalysed reaction is L-aspartyl-tRNA(Asn) + L-glutamine + ATP + H2O = L-asparaginyl-tRNA(Asn) + L-glutamate + ADP + phosphate + 2 H(+). In terms of biological role, allows the formation of correctly charged Asn-tRNA(Asn) or Gln-tRNA(Gln) through the transamidation of misacylated Asp-tRNA(Asn) or Glu-tRNA(Gln) in organisms which lack either or both of asparaginyl-tRNA or glutaminyl-tRNA synthetases. The reaction takes place in the presence of glutamine and ATP through an activated phospho-Asp-tRNA(Asn) or phospho-Glu-tRNA(Gln). The sequence is that of Aspartyl/glutamyl-tRNA(Asn/Gln) amidotransferase subunit C from Methylobacterium sp. (strain 4-46).